The sequence spans 110 residues: Keratin-associated protein 6-3 (110 aa).

It belongs to the KRTAP type 6 family. In terms of assembly, interacts with hair keratins.

In the hair cortex, hair keratin intermediate filaments are embedded in an interfilamentous matrix, consisting of hair keratin-associated proteins (KRTAP), which are essential for the formation of a rigid and resistant hair shaft through their extensive disulfide bond cross-linking with abundant cysteine residues of hair keratins. The matrix proteins include the high-sulfur and high-glycine-tyrosine keratins. The protein is Keratin-associated protein 6-3 of Homo sapiens (Human).